A 206-amino-acid polypeptide reads, in one-letter code: Peptidyl-tRNA hydrolase (206 aa).

Tyr-14 contacts tRNA. His-19 functions as the Proton acceptor in the catalytic mechanism. Residues Phe-64 and Asn-66 each coordinate tRNA. Residues Val-185 to Arg-206 are disordered. The segment covering Ala-189–Arg-206 has biased composition (basic and acidic residues).

Belongs to the PTH family. Monomer.

The protein resides in the cytoplasm. It catalyses the reaction an N-acyl-L-alpha-aminoacyl-tRNA + H2O = an N-acyl-L-amino acid + a tRNA + H(+). In terms of biological role, hydrolyzes ribosome-free peptidyl-tRNAs (with 1 or more amino acids incorporated), which drop off the ribosome during protein synthesis, or as a result of ribosome stalling. Functionally, catalyzes the release of premature peptidyl moieties from peptidyl-tRNA molecules trapped in stalled 50S ribosomal subunits, and thus maintains levels of free tRNAs and 50S ribosomes. In Herpetosiphon aurantiacus (strain ATCC 23779 / DSM 785 / 114-95), this protein is Peptidyl-tRNA hydrolase.